The sequence spans 398 residues: Elongation factor Tu (398 aa).

Residues 10-207 enclose the tr-type G domain; the sequence is KPHVNIGTIG…TVDEYIPEPE (198 aa). Residues 19-26 form a G1 region; the sequence is GHVDHGKT. 19–26 serves as a coordination point for GTP; the sequence is GHVDHGKT. Threonine 26 contacts Mg(2+). A G2 region spans residues 63-67; it reads GITIN. The tract at residues 84–87 is G3; that stretch reads DAPG. GTP is bound by residues 84 to 88 and 139 to 142; these read DAPGH and NKVD. Positions 139 to 142 are G4; that stretch reads NKVD. Residues 177 to 179 are G5; the sequence is SAL.

The protein belongs to the TRAFAC class translation factor GTPase superfamily. Classic translation factor GTPase family. EF-Tu/EF-1A subfamily. In terms of assembly, monomer.

It is found in the cytoplasm. It catalyses the reaction GTP + H2O = GDP + phosphate + H(+). In terms of biological role, GTP hydrolase that promotes the GTP-dependent binding of aminoacyl-tRNA to the A-site of ribosomes during protein biosynthesis. In Streptococcus sanguinis (strain SK36), this protein is Elongation factor Tu.